A 522-amino-acid chain; its full sequence is Sensory neuron membrane protein 1 (522 aa).

Residues 1–11 (MQLAKPLKYAA) lie on the Cytoplasmic side of the membrane. The helical transmembrane segment at 12-32 (ISGIVAFVGLMFGWVIFPAIL) threads the bilayer. The Extracellular portion of the chain corresponds to 33 to 458 (KSQLKKEMAL…SQLFIPKRVV (426 aa)). 3 N-linked (GlcNAc...) asparagine glycosylation sites follow: Asn67, Asn105, and Asn229. 3 disulfide bridges follow: Cys268–Cys333, Cys297–Cys352, and Cys335–Cys341. N-linked (GlcNAc...) asparagine glycosylation occurs at Asn440. A helical membrane pass occupies residues 459 to 479 (SVVCWCMISFGSLGVIAAVIF). Topologically, residues 480-522 (HFKGDIMHLAVAGDNSVSKIKPENDENKEVGVMGQNQEPAKVM) are cytoplasmic. Residues 500-522 (KPENDENKEVGVMGQNQEPAKVM) are disordered. The segment covering 513–522 (GQNQEPAKVM) has biased composition (polar residues).

Belongs to the CD36 family. Principal component of the olfactory cilia membrane. Detected in both male and female antennae but not present in leg, abdomen, thorax or head.

It localises to the cell membrane. Plays an olfactory role that is not restricted to pheromone sensitivity. This Bombyx mori (Silk moth) protein is Sensory neuron membrane protein 1.